We begin with the raw amino-acid sequence, 839 residues long: Autophagy-related protein 9A (839 aa).

Ala-2 carries the N-acetylalanine modification. Over Ala-2–Cys-61 the chain is Cytoplasmic. The Tyrosine-based sorting signal signature appears at Tyr-8–Leu-11. Phosphoserine occurs at positions 14, 16, and 18. A helical membrane pass occupies residues Met-62 to Val-84. Residues Ser-85 to Glu-128 lie on the Lumenal side of the membrane. The N-linked (GlcNAc...) asparagine glycan is linked to Asn-99. Residues Asn-129–Ile-154 traverse the membrane as a helical segment. Topologically, residues Cys-155–Ile-290 are cytoplasmic. Residues Leu-291–Cys-301 lie within the membrane without spanning it. Over Pro-302 to Val-319 the chain is Cytoplasmic. The stretch at Leu-320–Gly-328 is an intramembrane region. The Cytoplasmic segment spans residues Ala-329–Pro-371. The helical transmembrane segment at Leu-372–Tyr-397 threads the bilayer. The Lumenal portion of the chain corresponds to Asp-398–His-406. Residues Val-407 to Phe-424 traverse the membrane as a helical segment. Residues Ile-425–Gln-470 lie on the Cytoplasmic side of the membrane. An intramembrane segment occupies Tyr-471 to Leu-480. Topologically, residues Leu-481–Pro-483 are cytoplasmic. An intramembrane segment occupies Ile-484–Phe-492. Residues Cys-493 to Val-839 are Cytoplasmic-facing. Ser-656, Ser-735, Ser-738, Ser-741, and Ser-828 each carry phosphoserine. 2 disordered regions span residues Ser-656–Trp-689 and His-717–Val-839. Positions Glu-724–Asp-736 are enriched in basic and acidic residues. Composition is skewed to acidic residues over residues Glu-737–Gly-747 and Val-823–Leu-832.

The protein belongs to the ATG9 family. Homotrimer; forms a homotrimer with a central pore that forms a path between the two membrane leaflets. Interacts (via cytoplasmic its C-terminus) with ATG2A. Interacts with SUPT20H. Interacts (via the tyrosine-based sorting signal motif) with AP4M1; promoting association with the AP-4 complex. Interacts with ARFIP1 and ARFIP2. Interacts with PI4K2A and PI4KB. Interacts with ATG4A; the interaction is direct and promotes ATG9A trafficking. Ufmylated in a DDRGK1 dependent manner.

It localises to the preautophagosomal structure membrane. Its subcellular location is the cytoplasmic vesicle. It is found in the autophagosome membrane. The protein resides in the golgi apparatus. The protein localises to the trans-Golgi network membrane. It localises to the late endosome membrane. Its subcellular location is the recycling endosome membrane. It is found in the endoplasmic reticulum membrane. The protein resides in the mitochondrion membrane. It catalyses the reaction a 1,2-diacyl-sn-glycero-3-phosphocholine(in) = a 1,2-diacyl-sn-glycero-3-phosphocholine(out). The catalysed reaction is a 1,2-diacyl-sn-glycero-3-phospho-L-serine(in) = a 1,2-diacyl-sn-glycero-3-phospho-L-serine(out). The enzyme catalyses a 1,2-diacyl-sn-glycero-3-phosphoethanolamine(in) = a 1,2-diacyl-sn-glycero-3-phosphoethanolamine(out). In terms of biological role, phospholipid scramblase involved in autophagy by mediating autophagosomal membrane expansion. Cycles between the preautophagosomal structure/phagophore assembly site (PAS) and the cytoplasmic vesicle pool and supplies membrane for the growing autophagosome. Lipid scramblase activity plays a key role in preautophagosomal structure/phagophore assembly by distributing the phospholipids that arrive through ATG2 (ATG2A or ATG2B) from the cytoplasmic to the luminal leaflet of the bilayer, thereby driving autophagosomal membrane expansion. Also required to supply phosphatidylinositol 4-phosphate to the autophagosome initiation site by recruiting the phosphatidylinositol 4-kinase beta (PI4KB) in a process dependent on ARFIP2, but not ARFIP1. In addition to autophagy, also plays a role in necrotic cell death. The polypeptide is Autophagy-related protein 9A (Rattus norvegicus (Rat)).